A 258-amino-acid polypeptide reads, in one-letter code: MIRPRYGWMYSSGIAVHLCAAVCAHSAVPAAWTFAEQTQAQKTDTPLDSSSYAVTSPEEAPNEADPFEKELEHAFERAHVSTGGADSSSHADFVHMEEAGRAHASANRWYHETFDSRQRPSSAVLYEGAQLLHTVHWHYVGDRLFPCEKIITTPHTRIRARYNFSGKIVAYEMHTRGVLVYARTYRYDAHARICEKEETTARGNERITYEYRGKVDVLEKRYRNGVLQAIIHQKEGAQDVQVFERGKEIYSTKEVHDE.

Residues 40-54 (AQKTDTPLDSSSYAV) show a composition bias toward polar residues. The tract at residues 40-63 (AQKTDTPLDSSSYAVTSPEEAPNE) is disordered.

This is an uncharacterized protein from Treponema pallidum (strain Nichols).